The following is a 382-amino-acid chain: RNA binding protein fox-1 homolog 1-like (382 aa).

Disordered regions lie at residues 34–79 and 94–148; these read QEAG…AAHP and GPQH…QPKR. A compositionally biased stretch (pro residues) spans 49–65; that stretch reads YAPPPSYPPPGQAPPTP. The span at 101–110 shows a compositional bias: polar residues; the sequence is ESITASNTDD. The region spanning 147-223 is the RRM domain; the sequence is KRLHVSNIPF…RKIEVNNATA (77 aa).

In terms of tissue distribution, expressed during muscle development in adaxial cells, somites, cardiac precursors, finbuds and jaw muscle cells.

It is found in the nucleus. Its function is as follows. RNA-binding protein that regulates alternative splicing events by binding to 5'-GCAUG-3' elements. Regulates alternative splicing of tissue-specific exons. This Danio rerio (Zebrafish) protein is RNA binding protein fox-1 homolog 1-like (rbfox1l).